Here is a 307-residue protein sequence, read N- to C-terminus: Thioredoxin reductase (307 aa).

36–43 provides a ligand contact to FAD; it reads DNAAPGGK. Cys138 and Cys141 are joined by a disulfide. 278-287 is an FAD binding site; it reads DIRIKDIRQI.

It belongs to the class-II pyridine nucleotide-disulfide oxidoreductase family. In terms of assembly, homodimer. Requires FAD as cofactor.

It is found in the cytoplasm. The enzyme catalyses [thioredoxin]-dithiol + NADP(+) = [thioredoxin]-disulfide + NADPH + H(+). The sequence is that of Thioredoxin reductase (trxB) from Mycoplasmopsis pulmonis (strain UAB CTIP) (Mycoplasma pulmonis).